We begin with the raw amino-acid sequence, 533 residues long: Kelch-like protein 33 (533 aa).

Kelch repeat units follow at residues Ala-210–Ala-258, Glu-273–Gly-322, Lys-323–Gly-369, Leu-371–Gly-418, Arg-419–Gly-465, and Leu-467–Leu-514.

The sequence is that of Kelch-like protein 33 (KLHL33) from Homo sapiens (Human).